Consider the following 515-residue polypeptide: 2-isopropylmalate synthase (515 aa).

One can recognise a Pyruvate carboxyltransferase domain in the interval 5-267; that stretch reads VIIFDTTLRD…RTGINHEEIH (263 aa). Mn(2+) contacts are provided by Asp14, His202, His204, and Asn238. The tract at residues 392–515 is regulatory domain; it reads KLNYLSVQSG…EMKQKKIATV (124 aa).

This sequence belongs to the alpha-IPM synthase/homocitrate synthase family. LeuA type 1 subfamily. As to quaternary structure, homodimer. Mn(2+) serves as cofactor.

The protein localises to the cytoplasm. The enzyme catalyses 3-methyl-2-oxobutanoate + acetyl-CoA + H2O = (2S)-2-isopropylmalate + CoA + H(+). Its pathway is amino-acid biosynthesis; L-leucine biosynthesis; L-leucine from 3-methyl-2-oxobutanoate: step 1/4. Catalyzes the condensation of the acetyl group of acetyl-CoA with 3-methyl-2-oxobutanoate (2-ketoisovalerate) to form 3-carboxy-3-hydroxy-4-methylpentanoate (2-isopropylmalate). The protein is 2-isopropylmalate synthase of Vibrio vulnificus (strain CMCP6).